The sequence spans 139 residues: Large-conductance mechanosensitive channel (139 aa).

2 consecutive transmembrane segments (helical) span residues 9 to 29 and 79 to 99; these read AFAV…GAAF and IQTV…VKAI.

This sequence belongs to the MscL family. In terms of assembly, homopentamer.

The protein localises to the cell inner membrane. Functionally, channel that opens in response to stretch forces in the membrane lipid bilayer. May participate in the regulation of osmotic pressure changes within the cell. The polypeptide is Large-conductance mechanosensitive channel (Pseudomonas putida (strain W619)).